The primary structure comprises 228 residues: Probable septum site-determining protein MinC (228 aa).

This sequence belongs to the MinC family. Interacts with MinD and FtsZ.

In terms of biological role, cell division inhibitor that blocks the formation of polar Z ring septums. Rapidly oscillates between the poles of the cell to destabilize FtsZ filaments that have formed before they mature into polar Z rings. Prevents FtsZ polymerization. In Bacillus cytotoxicus (strain DSM 22905 / CIP 110041 / 391-98 / NVH 391-98), this protein is Probable septum site-determining protein MinC.